The chain runs to 112 residues: Small ribosomal subunit protein bS6 (112 aa).

The protein belongs to the bacterial ribosomal protein bS6 family.

Functionally, binds together with bS18 to 16S ribosomal RNA. In Chlamydia felis (strain Fe/C-56) (Chlamydophila felis), this protein is Small ribosomal subunit protein bS6.